The following is a 299-amino-acid chain: ATP phosphoribosyltransferase (299 aa).

The protein belongs to the ATP phosphoribosyltransferase family. Long subfamily. Equilibrium between an active dimeric form, an inactive hexameric form and higher aggregates. Interconversion between the various forms is largely reversible and is influenced by the natural substrates and inhibitors of the enzyme. Requires Mg(2+) as cofactor.

The protein localises to the cytoplasm. It catalyses the reaction 1-(5-phospho-beta-D-ribosyl)-ATP + diphosphate = 5-phospho-alpha-D-ribose 1-diphosphate + ATP. It functions in the pathway amino-acid biosynthesis; L-histidine biosynthesis; L-histidine from 5-phospho-alpha-D-ribose 1-diphosphate: step 1/9. Feedback inhibited by histidine. Its function is as follows. Catalyzes the condensation of ATP and 5-phosphoribose 1-diphosphate to form N'-(5'-phosphoribosyl)-ATP (PR-ATP). Has a crucial role in the pathway because the rate of histidine biosynthesis seems to be controlled primarily by regulation of HisG enzymatic activity. This Escherichia coli O81 (strain ED1a) protein is ATP phosphoribosyltransferase.